Reading from the N-terminus, the 100-residue chain is Aspartyl/glutamyl-tRNA(Asn/Gln) amidotransferase subunit C (100 aa).

This sequence belongs to the GatC family. As to quaternary structure, heterotrimer of A, B and C subunits.

It catalyses the reaction L-glutamyl-tRNA(Gln) + L-glutamine + ATP + H2O = L-glutaminyl-tRNA(Gln) + L-glutamate + ADP + phosphate + H(+). The enzyme catalyses L-aspartyl-tRNA(Asn) + L-glutamine + ATP + H2O = L-asparaginyl-tRNA(Asn) + L-glutamate + ADP + phosphate + 2 H(+). Its function is as follows. Allows the formation of correctly charged Asn-tRNA(Asn) or Gln-tRNA(Gln) through the transamidation of misacylated Asp-tRNA(Asn) or Glu-tRNA(Gln) in organisms which lack either or both of asparaginyl-tRNA or glutaminyl-tRNA synthetases. The reaction takes place in the presence of glutamine and ATP through an activated phospho-Asp-tRNA(Asn) or phospho-Glu-tRNA(Gln). This Rickettsia peacockii (strain Rustic) protein is Aspartyl/glutamyl-tRNA(Asn/Gln) amidotransferase subunit C.